The sequence spans 420 residues: L-cysteine:1D-myo-inositol 2-amino-2-deoxy-alpha-D-glucopyranoside ligase (420 aa).

C48 serves as a coordination point for Zn(2+). Residues 48–51 (CGIT), T63, and 86–88 (NIT) each bind L-cysteinyl-5'-AMP. Residues 50–60 (ITPYDSTHLGH) carry the 'HIGH' region motif. Positions 192 to 197 (ERGGDP) match the 'ERGGDP' region motif. W232 contacts L-cysteinyl-5'-AMP. Residue C236 participates in Zn(2+) binding. 254 to 256 (GSD) serves as a coordination point for L-cysteinyl-5'-AMP. H261 serves as a coordination point for Zn(2+). L-cysteinyl-5'-AMP is bound at residue I288. The 'KMSKS' region motif lies at 294-298 (KMSKS).

It belongs to the class-I aminoacyl-tRNA synthetase family. MshC subfamily. In terms of assembly, monomer. The cofactor is Zn(2+).

It catalyses the reaction 1D-myo-inositol 2-amino-2-deoxy-alpha-D-glucopyranoside + L-cysteine + ATP = 1D-myo-inositol 2-(L-cysteinylamino)-2-deoxy-alpha-D-glucopyranoside + AMP + diphosphate + H(+). Functionally, catalyzes the ATP-dependent condensation of GlcN-Ins and L-cysteine to form L-Cys-GlcN-Ins. This chain is L-cysteine:1D-myo-inositol 2-amino-2-deoxy-alpha-D-glucopyranoside ligase, found in Corynebacterium glutamicum (strain R).